A 141-amino-acid polypeptide reads, in one-letter code: Large ribosomal subunit protein uL11B (141 aa).

The protein belongs to the universal ribosomal protein uL11 family. As to quaternary structure, part of the ribosomal stalk of the 50S ribosomal subunit. Interacts with L10 and the large rRNA to form the base of the stalk. L10 forms an elongated spine to which L12 dimers bind in a sequential fashion forming a multimeric L10(L12)X complex. In terms of processing, one or more lysine residues are methylated.

In terms of biological role, forms part of the ribosomal stalk which helps the ribosome interact with GTP-bound translation factors. In Halalkalibacterium halodurans (strain ATCC BAA-125 / DSM 18197 / FERM 7344 / JCM 9153 / C-125) (Bacillus halodurans), this protein is Large ribosomal subunit protein uL11B.